Reading from the N-terminus, the 251-residue chain is CCN family member 5 (251 aa).

Residues methionine 1–serine 23 form the signal peptide. The 80-residue stretch at glutamine 24 to asparagine 103 folds into the IGFBP N-terminal domain. 6 disulfide bridges follow: cysteine 26–cysteine 50, cysteine 30–cysteine 52, cysteine 32–cysteine 53, cysteine 39–cysteine 56, cysteine 64–cysteine 78, and cysteine 70–cysteine 100. A VWFC domain is found at glycine 98 to aspartate 164. A TSP type-1 domain is found at cysteine 195–leucine 239. N-linked (GlcNAc...) asparagine glycosylation is present at asparagine 197.

It belongs to the CCN family.

Its subcellular location is the secreted. Its function is as follows. May play an important role in modulating bone turnover. Promotes the adhesion of osteoblast cells and inhibits the binding of fibrinogen to integrin receptors. In addition, inhibits osteocalcin production. This chain is CCN family member 5 (Ccn5), found in Mus musculus (Mouse).